The primary structure comprises 407 residues: ETS domain-containing protein Elk-3 (407 aa).

The ETS DNA-binding region spans 5-85 (ITLWQFLLQL…IGQKFVYKFV (81 aa)). Residue Lys92 forms a Glycyl lysine isopeptide (Lys-Gly) (interchain with G-Cter in SUMO2) linkage. Ser115 is modified (phosphoserine). Residue Lys165 forms a Glycyl lysine isopeptide (Lys-Gly) (interchain with G-Cter in SUMO2) linkage. Disordered stretches follow at residues 234 to 253 (SSAS…SPLP) and 271 to 298 (LEPL…KGLE). A CTBP-binding motif motif is present at residues 273 to 277 (PLNLS). Ser396 is modified (phosphoserine).

Belongs to the ETS family. As to quaternary structure, interacts with CTBP1.

It localises to the nucleus. Its function is as follows. May be a negative regulator of transcription, but can activate transcription when coexpressed with Ras, Src or Mos. Forms a ternary complex with the serum response factor and the ETS and SRF motifs of the Fos serum response element. This chain is ETS domain-containing protein Elk-3 (ELK3), found in Homo sapiens (Human).